The chain runs to 275 residues: Probable ribosomal RNA small subunit methyltransferase A (275 aa).

S-adenosyl-L-methionine-binding residues include leucine 13, glycine 38, glutamate 59, aspartate 84, and asparagine 101.

The protein belongs to the class I-like SAM-binding methyltransferase superfamily. rRNA adenine N(6)-methyltransferase family. RsmA subfamily.

The protein resides in the cytoplasm. Its function is as follows. Specifically dimethylates two adjacent adenosines in the loop of a conserved hairpin near the 3'-end of 16S rRNA in the 30S particle. May play a critical role in biogenesis of 30S subunits. The polypeptide is Probable ribosomal RNA small subunit methyltransferase A (Methanocaldococcus jannaschii (strain ATCC 43067 / DSM 2661 / JAL-1 / JCM 10045 / NBRC 100440) (Methanococcus jannaschii)).